The sequence spans 306 residues: Acetyl-coenzyme A carboxylase carboxyl transferase subunit beta (306 aa).

One can recognise a CoA carboxyltransferase N-terminal domain in the interval 27–296; the sequence is LWHKCPSCEA…PRFVAPVIEP (270 aa). Cysteine 31, cysteine 34, cysteine 50, and cysteine 53 together coordinate Zn(2+). The segment at 31–53 adopts a C4-type zinc-finger fold; it reads CPSCEAVLYRPELEKTLDVCPKC.

Belongs to the AccD/PCCB family. Acetyl-CoA carboxylase is a heterohexamer composed of biotin carboxyl carrier protein (AccB), biotin carboxylase (AccC) and two subunits each of ACCase subunit alpha (AccA) and ACCase subunit beta (AccD). Zn(2+) serves as cofactor.

The protein localises to the cytoplasm. The catalysed reaction is N(6)-carboxybiotinyl-L-lysyl-[protein] + acetyl-CoA = N(6)-biotinyl-L-lysyl-[protein] + malonyl-CoA. The protein operates within lipid metabolism; malonyl-CoA biosynthesis; malonyl-CoA from acetyl-CoA: step 1/1. In terms of biological role, component of the acetyl coenzyme A carboxylase (ACC) complex. Biotin carboxylase (BC) catalyzes the carboxylation of biotin on its carrier protein (BCCP) and then the CO(2) group is transferred by the transcarboxylase to acetyl-CoA to form malonyl-CoA. The chain is Acetyl-coenzyme A carboxylase carboxyl transferase subunit beta from Pseudomonas savastanoi pv. phaseolicola (strain 1448A / Race 6) (Pseudomonas syringae pv. phaseolicola (strain 1448A / Race 6)).